The primary structure comprises 252 residues: tRNA (guanine-N(7)-)-methyltransferase (252 aa).

S-adenosyl-L-methionine contacts are provided by glutamate 51, aspartate 76, asparagine 103, and aspartate 125. Residue aspartate 125 is part of the active site. Residues lysine 129, aspartate 159, and 199–202 (TYYE) each bind substrate.

It belongs to the class I-like SAM-binding methyltransferase superfamily. TrmB family.

It catalyses the reaction guanosine(46) in tRNA + S-adenosyl-L-methionine = N(7)-methylguanosine(46) in tRNA + S-adenosyl-L-homocysteine. It participates in tRNA modification; N(7)-methylguanine-tRNA biosynthesis. Its function is as follows. Catalyzes the formation of N(7)-methylguanine at position 46 (m7G46) in tRNA. The sequence is that of tRNA (guanine-N(7)-)-methyltransferase from Bacteroides fragilis (strain YCH46).